The sequence spans 483 residues: ATP-dependent RNA helicase DDX25 (483 aa).

Residues 97 to 125 (KSFEELHLKNELLRGIYAMGFNRPSKIQE) carry the Q motif motif. The Helicase ATP-binding domain occupies 130–300 (MMLADPPQNL…ERIVPDPNII (171 aa)). 143–150 (SQSGTGKT) is a binding site for ATP. The DEAD box motif lies at 247-250 (DEAD). Positions 311–478 (NIQQFYDQCE…KLNSMDMDEM (168 aa)) constitute a Helicase C-terminal domain.

It belongs to the DEAD box helicase family. In terms of tissue distribution, an mRNA component of germ plasm. Localizes to the granulo-fibrillar material (GFM) of the mitochondrial cloud in stage I oocytes. Associated, at a low level, with the periphery of mature germinal granules in later stage oocytes. Localizes to the vegetal cortex in stage II oocytes and segregates with germ plasm during early embryogenesis. In adults, expression is restricted to the ovary and, at a lower level, to spermatogonia, spermatocytes and spermatids of the testis.

It localises to the cytoplasm. The protein resides in the nucleus. The enzyme catalyses ATP + H2O = ADP + phosphate + H(+). ATP-dependent RNA helicase. The polypeptide is ATP-dependent RNA helicase DDX25 (Xenopus laevis (African clawed frog)).